A 160-amino-acid chain; its full sequence is Tic20 family protein (160 aa).

4 consecutive transmembrane segments (helical) span residues 13-33, 53-73, 87-107, and 122-142; these read FFSA…GGFL, FYYQ…MAVV, MQAI…AYVI, and NFAF…SVLG.

Belongs to the Tic20 family.

It is found in the cell membrane. In Synechocystis sp. (strain ATCC 27184 / PCC 6803 / Kazusa), this protein is Tic20 family protein.